We begin with the raw amino-acid sequence, 494 residues long: UPF0371 protein SPCG_0344 (494 aa).

The protein belongs to the UPF0371 family.

The protein is UPF0371 protein SPCG_0344 of Streptococcus pneumoniae (strain CGSP14).